We begin with the raw amino-acid sequence, 21 residues long: Alpha-aminoadipic semialdehyde dehydrogenase (21 aa).

This sequence belongs to the aldehyde dehydrogenase family. Homotetramer.

The enzyme catalyses (S)-2-amino-6-oxohexanoate + NADP(+) + H2O = L-2-aminoadipate + NADPH + 2 H(+). It carries out the reaction (S)-2-amino-6-oxohexanoate + NAD(+) + H2O = L-2-aminoadipate + NADH + 2 H(+). The sequence is that of Alpha-aminoadipic semialdehyde dehydrogenase (aldh7a1) from Ctenopharyngodon idella (Grass carp).